A 261-amino-acid polypeptide reads, in one-letter code: Homeobox protein ceh-33 (261 aa).

The segment at residues 133–192 (GEETSYCFRDKSRVLLRDWYCRNSYPSPREKRELAEKTHLTVTQVSNWFKNRRQRDRAGV) is a DNA-binding region (homeobox).

Belongs to the SIX/Sine oculis homeobox family.

It is found in the nucleus. This Caenorhabditis elegans protein is Homeobox protein ceh-33 (ceh-33).